A 354-amino-acid chain; its full sequence is tRNA pseudouridine synthase D (354 aa).

D86 acts as the Nucleophile in catalysis. The region spanning 162–309 (GVPNYFGPQR…LEVGRRALRL (148 aa)) is the TRUD domain.

Belongs to the pseudouridine synthase TruD family.

It carries out the reaction uridine(13) in tRNA = pseudouridine(13) in tRNA. In terms of biological role, responsible for synthesis of pseudouridine from uracil-13 in transfer RNAs. This Methylococcus capsulatus (strain ATCC 33009 / NCIMB 11132 / Bath) protein is tRNA pseudouridine synthase D.